The following is a 510-amino-acid chain: MIWHVQNENFILDSTRIFMKAFHLLLFDGSFIFPECILIFGLILLLMIDSTSDQKDIPWLYFISSTSLVMSITALLFRWREEPMISFSGNFQTNNFNEIFQFLILLCSTLCIPLSVEYIECTEMAITEFLLFVLTATLGGMFLCGANDLITIFVAPECFSLCSYLLSGYTKKDVRSNEATTKYLLMGGASSSILVHGFSWLYGSSGGEIELQEIVNGLLNTQMYNSPGISIALIFITVGIGFKLSPAPSHQWTPDVYEGSPTPVVAFLSVTSKVAASASATRIFDIPFYFSSNEWHLLLEILAILSMILGNLIAITQTSMKRMLAYSSIGQIGYVIIGIIVGDSNGGYASMITYMLFYIAMNLGTFARIVSFGLRTGTDNIRDYAGLYTKDPLLALSLALCLLSLGGLPPLAGFFGKLHLFWCGWQAGLYFLVSIGLLTSVVSIYYYLKIIKLLMTGRNQEITPHVRNYRRSPLRSNNSIELSMIVCVIASTIPGISMNPIIEIAQDTLF.

13 helical membrane passes run 24 to 44, 57 to 77, 99 to 119, 124 to 144, 149 to 169, 183 to 203, 227 to 247, 295 to 315, 323 to 343, 347 to 367, 395 to 415, 418 to 438, and 482 to 502; these read LLLF…GLIL, IPWL…ALLF, IFQF…VEYI, MAIT…MFLC, LITI…LSGY, YLLM…WLYG, PGIS…LSPA, WHLL…LIAI, MLAY…IVGD, GYAS…GTFA, ALSL…AGFF, LHLF…IGLL, and LSMI…NPII.

The protein belongs to the complex I subunit 2 family. NDH is composed of at least 16 different subunits, 5 of which are encoded in the nucleus.

It is found in the plastid. Its subcellular location is the chloroplast thylakoid membrane. The catalysed reaction is a plastoquinone + NADH + (n+1) H(+)(in) = a plastoquinol + NAD(+) + n H(+)(out). It catalyses the reaction a plastoquinone + NADPH + (n+1) H(+)(in) = a plastoquinol + NADP(+) + n H(+)(out). In terms of biological role, NDH shuttles electrons from NAD(P)H:plastoquinone, via FMN and iron-sulfur (Fe-S) centers, to quinones in the photosynthetic chain and possibly in a chloroplast respiratory chain. The immediate electron acceptor for the enzyme in this species is believed to be plastoquinone. Couples the redox reaction to proton translocation, and thus conserves the redox energy in a proton gradient. The polypeptide is NAD(P)H-quinone oxidoreductase subunit 2 B, chloroplastic (Cucumis sativus (Cucumber)).